The sequence spans 190 residues: Vascular endothelial growth factor A (190 aa).

An N-terminal signal peptide occupies residues 1 to 26 (MNFLLSWVHWTLALLLYLHHAKWSQA). Disulfide bonds link Cys-51–Cys-93, Cys-82–Cys-127, and Cys-86–Cys-129. N-linked (GlcNAc...) asparagine glycosylation occurs at Asn-100.

It belongs to the PDGF/VEGF growth factor family. Homodimer; disulfide-linked. Also found as heterodimer with PGF. Interacts with NRP1. Interacts with isoform 2 of BSG. Interacts with CD82; this interaction inhibits VEGFA-mediated signaling pathway.

The protein resides in the secreted. Its function is as follows. Growth factor active in angiogenesis, vasculogenesis and endothelial cell growth. Induces endothelial cell proliferation, promotes cell migration, inhibits apoptosis and induces permeabilization of blood vessels. Binds to the FLT1/VEGFR1 and KDR/VEGFR2 receptors, heparan sulfate and heparin. Binding to NRP1 receptor initiates a signaling pathway needed for motor neuron axon guidance and cell body migration, including for the caudal migration of facial motor neurons from rhombomere 4 to rhombomere 6 during embryonic development. Also binds the DEAR/FBXW7-AS1 receptor. The sequence is that of Vascular endothelial growth factor A (VEGFA) from Mesocricetus auratus (Golden hamster).